Consider the following 151-residue polypeptide: uncharacterized protein (151 aa).

BON domains lie at 2–68 and 78–146; these read DDAA…AVDK and IDSA…RLKH.

This is an uncharacterized protein from Anaplasma centrale.